A 142-amino-acid polypeptide reads, in one-letter code: Large ribosomal subunit protein uL13 (142 aa).

The protein belongs to the universal ribosomal protein uL13 family. As to quaternary structure, part of the 50S ribosomal subunit.

This protein is one of the early assembly proteins of the 50S ribosomal subunit, although it is not seen to bind rRNA by itself. It is important during the early stages of 50S assembly. This Stenotrophomonas maltophilia (strain K279a) protein is Large ribosomal subunit protein uL13.